The following is a 488-amino-acid chain: Fumarate hydratase (488 aa).

The (S)-malate site is built by Ser105, Ser147, Asn148, Thr194, and His195. The active-site Proton donor/acceptor is the His195. Residue Ser340 is part of the active site. The (S)-malate site is built by Ser341, Lys346, and Asn348.

This sequence belongs to the class-II fumarase/aspartase family. Fumarase subfamily. Homotetramer.

Its subcellular location is the cytoplasm. It is found in the cytosol. It carries out the reaction (S)-malate = fumarate + H2O. Catalyzes the reversible stereospecific interconversion of fumarate to L-malate. Fumarate metabolism in the cytosol plays a role during urea cycle and arginine metabolism; fumarate being a by-product of the urea cycle and amino-acid catabolism. The chain is Fumarate hydratase from Schistosoma mansoni (Blood fluke).